Reading from the N-terminus, the 249-residue chain is Phosphoserine phosphatase (249 aa).

It belongs to the HAD-like hydrolase superfamily. In terms of assembly, homodimer. The cofactor is Mg(2+). Co(2+) serves as cofactor.

The catalysed reaction is O-phospho-L-serine + H2O = L-serine + phosphate. The enzyme catalyses O-phospho-D-serine + H2O = D-serine + phosphate. The protein operates within amino-acid biosynthesis; L-serine biosynthesis; L-serine from 3-phospho-D-glycerate: step 3/3. Catalyzes the last step of the phosphorylated serine biosynthetic pathway, i.e. dephosphorylation of O-phospho-L-serine to form L-serine. Is also able to dephosphorylate O-phospho-D-serine with similar efficiency. Displays a poor activity on L-phosphothreonine, and cannot use L-phosphotyrosine, pyridoxal phosphate, glucose 6-phosphate, or fructose 6-phosphate as substrates. The sequence is that of Phosphoserine phosphatase from Thermus thermophilus (strain ATCC BAA-163 / DSM 7039 / HB27).